The following is a 300-amino-acid chain: Polyamine aminopropyltransferase (300 aa).

The PABS domain maps to 4 to 237 (WHWHIEWQTP…GLWGFVYASD (234 aa)). Residue glutamine 33 coordinates S-methyl-5'-thioadenosine. The spermidine site is built by histidine 64 and glutamate 88. Residues aspartate 108 and 140 to 141 (DG) each bind S-methyl-5'-thioadenosine. Aspartate 158 acts as the Proton acceptor in catalysis. Proline 167 is a binding site for S-methyl-5'-thioadenosine.

Belongs to the spermidine/spermine synthase family. In terms of assembly, homodimer or homotetramer.

The protein localises to the cytoplasm. It carries out the reaction S-adenosyl 3-(methylsulfanyl)propylamine + putrescine = S-methyl-5'-thioadenosine + spermidine + H(+). It participates in amine and polyamine biosynthesis; spermidine biosynthesis; spermidine from putrescine: step 1/1. In terms of biological role, catalyzes the irreversible transfer of a propylamine group from the amino donor S-adenosylmethioninamine (decarboxy-AdoMet) to putrescine (1,4-diaminobutane) to yield spermidine. This chain is Polyamine aminopropyltransferase, found in Sulfurisphaera tokodaii (strain DSM 16993 / JCM 10545 / NBRC 100140 / 7) (Sulfolobus tokodaii).